The primary structure comprises 285 residues: Phosphatidylglycerol--prolipoprotein diacylglyceryl transferase (285 aa).

The next 5 membrane-spanning stretches (helical) occupy residues 17 to 37 (ALGL…GLTL), 43 to 63 (WYAL…LFLL), 78 to 98 (LVFW…VLFY), 113 to 133 (WEGG…IWWV), and 139 to 159 (LSWL…LFLG). Residue Arg-160 coordinates a 1,2-diacyl-sn-glycero-3-phospho-(1'-sn-glycerol). 3 helical membrane-spanning segments follow: residues 195–215 (LYEA…QFFA), 223–243 (GKLA…VEWF), and 256–276 (GLTM…WLII).

Belongs to the Lgt family.

The protein localises to the cell inner membrane. The enzyme catalyses L-cysteinyl-[prolipoprotein] + a 1,2-diacyl-sn-glycero-3-phospho-(1'-sn-glycerol) = an S-1,2-diacyl-sn-glyceryl-L-cysteinyl-[prolipoprotein] + sn-glycerol 1-phosphate + H(+). It participates in protein modification; lipoprotein biosynthesis (diacylglyceryl transfer). In terms of biological role, catalyzes the transfer of the diacylglyceryl group from phosphatidylglycerol to the sulfhydryl group of the N-terminal cysteine of a prolipoprotein, the first step in the formation of mature lipoproteins. The chain is Phosphatidylglycerol--prolipoprotein diacylglyceryl transferase from Zymomonas mobilis subsp. mobilis (strain ATCC 31821 / ZM4 / CP4).